A 513-amino-acid chain; its full sequence is Protein PNS1 (513 aa).

Positions 1 to 13 (MSNNNYPPPPNPP) are enriched in pro residues. The interval 1–41 (MSNNNYPPPPNPPNYQGEEQVHNVQPDLENNQEKYYAEQPQ) is disordered. Residues 1 to 60 (MSNNNYPPPPNPPNYQGEEQVHNVQPDLENNQEKYYAEQPQPSQQFEESFKIDKPKWNDW) are Cytoplasmic-facing. The helical transmembrane segment at 61-81 (PFTVFFLLTVAGFIAIAGITL) threads the bilayer. Topologically, residues 82–108 (NALKKTYGLQGSSIYNSTDTFTLNTNT) are extracellular. Residue N97 is glycosylated (N-linked (GlcNAc...) asparagine). The chain crosses the membrane as a helical span at residues 109 to 129 (IILFGFIIVVGVVLSVLIIVY). Topologically, residues 130–136 (ARMAPRV) are cytoplasmic. The chain crosses the membrane as a helical span at residues 137–157 (FITTGLILNIILGLGTCIYYF). Residues 158–163 (VAHYYS) lie on the Extracellular side of the membrane. A helical membrane pass occupies residues 164 to 182 (AAIVFLVFTLFTAWCYWSC). Residues 183–210 (RHRIPFSATVLEITIDVMKRYPSTLITS) lie on the Cytoplasmic side of the membrane. A helical membrane pass occupies residues 211 to 231 (FIGIIVSGLFSTLFSVVIVAT). Residues 232 to 251 (YVKYDPDSQGCDVAGGGCSQ) lie on the Extracellular side of the membrane. Residues 252 to 272 (SKLIGVLVFVFFAGYYISEVI) form a helical membrane-spanning segment. Residues 273–309 (KNVIHITIAGIYGTWYYLSNSDQGEPKHPALGAFKRA) lie on the Cytoplasmic side of the membrane. The chain crosses the membrane as a helical span at residues 310–330 (MTYCFGSVCFGSLIVSIIQLI). Topologically, residues 331–346 (RSFVQILKQNAFGSGD) are extracellular. Residues 347 to 367 (NCAGCGFLILDFVLGFIDWIV) form a helical membrane-spanning segment. At 368–412 (RYFNHYAYCYVALYGKSYLKSARDTFDLIRFKGMDALINDCFINT) the chain is on the cytoplasmic side. The chain crosses the membrane as a helical span at residues 413-433 (SLNLYSMFVGYVVALLAYFYL). Residues 434 to 460 (KFTDPAYNSSGTFYAPVVAFSFLISGQ) are Extracellular-facing. N441 carries N-linked (GlcNAc...) asparagine glycosylation. A helical transmembrane segment spans residues 461-481 (ITRIALTVISSGISTFFVALA). The Cytoplasmic portion of the chain corresponds to 482-513 (KDPEVFQMTNRDRFDEIFRNYPQVLQKITSDH).

It belongs to the CTL (choline transporter-like) family.

The protein localises to the cell membrane. Its function is as follows. Probably involved in transport through the plasma membrane. This is Protein PNS1 (PNS1) from Debaryomyces hansenii (strain ATCC 36239 / CBS 767 / BCRC 21394 / JCM 1990 / NBRC 0083 / IGC 2968) (Yeast).